We begin with the raw amino-acid sequence, 451 residues long: Tubulin alpha-1 chain (451 aa).

Gln-11 is a GTP binding site. Lys-40 carries the post-translational modification N6-acetyllysine. Positions 71, 144, 145, 179, 206, and 228 each coordinate GTP. Glu-71 is a Mg(2+) binding site. Glu-254 is a catalytic residue. The interval 432–451 (YEEVGADSAEGDEEDEGDEY) is disordered.

Belongs to the tubulin family. As to quaternary structure, dimer of alpha and beta chains. A typical microtubule is a hollow water-filled tube with an outer diameter of 25 nm and an inner diameter of 15 nM. Alpha-beta heterodimers associate head-to-tail to form protofilaments running lengthwise along the microtubule wall with the beta-tubulin subunit facing the microtubule plus end conferring a structural polarity. Microtubules usually have 13 protofilaments but different protofilament numbers can be found in some organisms and specialized cells. The cofactor is Mg(2+). In terms of processing, undergoes a tyrosination/detyrosination cycle, the cyclic removal and re-addition of a C-terminal tyrosine residue by the enzymes tubulin tyrosine carboxypeptidase (TTCP) and tubulin tyrosine ligase (TTL), respectively. Post-translationally, acetylation of alpha chains at Lys-40 stabilizes microtubules and affects affinity and processivity of microtubule motors. This modification has a role in multiple cellular functions, ranging from cell motility, cell cycle progression or cell differentiation to intracellular trafficking and signaling.

It localises to the cytoplasm. Its subcellular location is the cytoskeleton. The catalysed reaction is GTP + H2O = GDP + phosphate + H(+). In terms of biological role, tubulin is the major constituent of microtubules, a cylinder consisting of laterally associated linear protofilaments composed of alpha- and beta-tubulin heterodimers. Microtubules grow by the addition of GTP-tubulin dimers to the microtubule end, where a stabilizing cap forms. Below the cap, tubulin dimers are in GDP-bound state, owing to GTPase activity of alpha-tubulin. The chain is Tubulin alpha-1 chain from Gossypium hirsutum (Upland cotton).